The chain runs to 439 residues: Protease Do-like 1, chloroplastic (439 aa).

The serine protease stretch occupies residues 154-323 (QGSGSGFVWD…IPVDTVGGIV (170 aa)). Active-site charge relay system residues include His-173, Asp-203, and Ser-282. The 98-residue stretch at 326-423 (LVRFGKVTRP…EVTVEVLRGD (98 aa)) folds into the PDZ domain.

Belongs to the peptidase S1C family. As to quaternary structure, interacts with PTAC16 and other potential targets for degradation under high light conditions.

It is found in the plastid. It localises to the chloroplast thylakoid membrane. Inhibited by phenylmethylsulfonyl fluoride and O-phenanthroline. In terms of biological role, serine protease that is required at high temperature. May be involved in the degradation of damaged proteins. In vivo, can degrade beta-casein. The protein is Protease Do-like 1, chloroplastic (DEGP1) of Arabidopsis thaliana (Mouse-ear cress).